The chain runs to 282 residues: MKYIGAHVSAAGGLDQAPARAHALEATAFALFTKNQRQWKAAPLTDDAIDAFRAACTRYGYQSQQILPHDSYLINLGHPVTEALEKSRGAFIDEMQRCADLGLTLLNFHPGSHLLQIDERDCLSRIAESINLALSQTQGVCAVIENTAGQGSNLGFRFEQLAAIIEQVEDKSRVGVCIDTCHAFAAGYDLRDEAACGETFAQFSRTVGFSYLRGMHLNDAKSAFNSRVDRHQSLGEGNIGDAAFRWIMRDPRFDGIPLILETTDPGRWQDEIAWLKAQQTAE.

Residues histidine 69, histidine 109, glutamate 145, aspartate 179, histidine 182, histidine 216, aspartate 229, histidine 231, and glutamate 261 each coordinate Zn(2+).

It belongs to the AP endonuclease 2 family. The cofactor is Zn(2+).

It carries out the reaction Endonucleolytic cleavage to 5'-phosphooligonucleotide end-products.. Its function is as follows. Endonuclease IV plays a role in DNA repair. It cleaves phosphodiester bonds at apurinic or apyrimidinic (AP) sites, generating a 3'-hydroxyl group and a 5'-terminal sugar phosphate. This chain is Probable endonuclease 4, found in Edwardsiella ictaluri (strain 93-146).